The chain runs to 347 residues: Syntaxin-32 (347 aa).

At 1 to 325 the chain is on the cytoplasmic side; sequence MSARHGQSSY…RYLNSISSNR (325 aa). Disordered stretches follow at residues 172-191 and 208-251; these read HESRRQLFSSNASKESTNPF and PLPW…QQMV. Polar residues-rich tracts occupy residues 177–191 and 213–222; these read QLFSSNASKESTNPF and NGSSSSSSQL. Low complexity predominate over residues 237 to 249; the sequence is QQSQQQQQQQQQQ. The 63-residue stretch at 255-317 folds into the t-SNARE coiled-coil homology domain; that stretch reads DTYMQGRAEA…EGAQSQLARY (63 aa). A helical; Anchor for type IV membrane protein transmembrane segment spans residues 326–346; sequence WLMMKIFFVLIAFLMIFLFFV. Residue Ala347 is a topological domain, vesicular.

It belongs to the syntaxin family. In terms of assembly, part of the t-SNARE complex.

Its subcellular location is the golgi apparatus. The protein localises to the cis-Golgi network membrane. In terms of biological role, vesicle trafficking protein that functions in the secretory pathway. In Arabidopsis thaliana (Mouse-ear cress), this protein is Syntaxin-32 (SYP32).